The following is a 1262-amino-acid chain: SCL-interrupting locus protein homolog (1262 aa).

The interval 1 to 992 is interaction with RBM14; the sequence is MNTRFPSSKM…IDSPTKVKKN (992 aa). The segment at 220 to 762 is interaction with CPAP; the sequence is YKHGYITMDE…VSMEAQSSPG (543 aa). Disordered stretches follow at residues 369 to 409, 454 to 551, and 650 to 670; these read RSSQ…QKIS, LCDA…LAPQ, and GGMG…AGPS. Polar residues-rich tracts occupy residues 473 to 493, 500 to 512, and 540 to 551; these read PTNQ…QSST, QFRN…SLSV, and TLDSRQPSLAPQ. The interval 567 to 760 is PIN1-binding; that stretch reads PMELQVPTPS…ELVSMEAQSS (194 aa). 2 positions are modified to phosphoserine: serine 733 and serine 760. Disordered stretches follow at residues 782 to 804, 883 to 904, 925 to 959, and 1106 to 1129; these read NAAG…ISSE, APTE…EPYR, NASQ…KRHN, and SSDN…HVLN. Positions 792–803 are enriched in basic and acidic residues; the sequence is SQPKQDDTKISS. Residues 883–895 show a composition bias toward polar residues; it reads APTEGASNSTELP. Residues 949–959 are compositionally biased toward basic residues; sequence NTHHARKKRHN. Serine 1110 carries the post-translational modification Phosphoserine. A compositionally biased stretch (basic and acidic residues) spans 1116–1128; it reads PPSHADSESDHVL.

In terms of assembly, homodimer. Interacts with PIN1 via its WW domain. This interaction is dependent on Stil mitotic phosphorylation. Interacts with CPAP. Interacts with RBM14 and this interaction interferes with the interaction of STIL with CPAP. Forms a complex with CPAP and SASS6. nteracts (via N-terminus) with CEP85; this interaction is essential for efficient centriolar targeting of STIL and subsequent PLK4 activation. In terms of processing, ubiquitinated. Phosphorylated following the activation of the mitotic checkpoint. In terms of tissue distribution, ubiquitously expressed in adult and fetal tissues. Highly expressed in hematopoietic tissues such as thymus, bone marrow and spleen.

The protein localises to the cytoplasm. It is found in the cytosol. It localises to the cytoskeleton. The protein resides in the microtubule organizing center. Its subcellular location is the centrosome. The protein localises to the centriole. It is found in the cell cortex. Immediate-early gene. Plays an important role in embryonic development as well as in cellular growth and proliferation; its long-term silencing affects cell survival and cell cycle distribution as well as decreases CDK1 activity correlated with reduced phosphorylation of CDK1. Plays a role as a positive regulator of the sonic hedgehog pathway, acting downstream of PTCH1. Plays an important role in the regulation of centriole duplication. Required for the onset of procentriole formation and proper mitotic progression. During procentriole formation, is essential for the correct loading of SASS6 and CPAP to the base of the procentriole to initiate procentriole assembly. In complex with STIL acts as a modulator of PLK4-driven cytoskeletal rearrangements and directional cell motility. This chain is SCL-interrupting locus protein homolog (Stil), found in Mus musculus (Mouse).